Reading from the N-terminus, the 483-residue chain is Krueppel-like factor 4 (483 aa).

Positions 22–42 (TFASGPAGREKTLRPAGAPTN) are disordered. Lys-32 participates in a covalent cross-link: Glycyl lysine isopeptide (Lys-Gly) (interchain with G-Cter in ubiquitin). Positions 99-107 (DLLDLDFIL) match the 9aaTAD motif. At Ser-251 the chain carries Phosphoserine. A disordered region spans residues 294–395 (AGPQLSNGHR…KRGRRSWPRK (102 aa)). Residues 338 to 356 (LPLPPGFHPHPGPNYPPFL) show a composition bias toward pro residues. Glu-381 is modified (5-glutamyl polyglutamate). A compositionally biased stretch (basic residues) spans 386–395 (KRGRRSWPRK). The interaction with ZNF296 stretch occupies residues 386–483 (KRGRRSWPRK…HLALHMKRHF (98 aa)). 3 consecutive C2H2-type zinc fingers follow at residues 400–424 (HTCD…LRTH), 430–454 (YHCD…YRKH), and 460–482 (FQCQ…MKRH). The segment at 443–474 (RSDELTRHYRKHTGHRPFQCQKCDRAFSRSDH) is interaction with target DNA.

Belongs to the krueppel C2H2-type zinc-finger protein family. Interacts with MUC1 (via the C-terminal domain). Interacts with POU5F1/OCT4 and SOX2. Interacts with MEIS2 isoform MeisD and PBX1 isoform PBX1a. Interacts with ZNF296. Interacts with GLIS1. Interacts with BTRC; this interaction leads to KLF4 ubiquitination and subsequent degradation. Interacts with IPO7; the interaction facilitates nuclear translocation of KLF4 in dental papilla cells. Ubiquitinated. 'Lys-48'-linked ubiquitinated and targeted for proteasomal degradation by the SCF(BTRC) E3 ubiquitin-protein ligase complex, thereby negatively regulating cell pluripotency maintenance and embryogenesis. In terms of processing, polyglutamylated by TTLL1 and TTLL4 at Glu-381, which inhibits KLF4 binding with E3 ligase component BTRC, thereby impeding ubiquitination. Deglutamylated by CCP1 and CCP6; deglutamylation promotes KLF4 ubiquitination. KLF4 glutamylation state plays a critical role in the regulation of its function in cell reprogramming, pluripotency maintenance and embryogenesis. In terms of tissue distribution, highest expression in the colon. Lower levels in testis, lung and small intestine.

The protein resides in the nucleus. It localises to the cytoplasm. Transcription factor; can act both as activator and as repressor. Binds the 5'-CACCC-3' core sequence. Binds to the promoter region of its own gene and can activate its own transcription. Regulates the expression of key transcription factors during embryonic development. Plays an important role in maintaining embryonic stem cells, and in preventing their differentiation. Required for establishing the barrier function of the skin and for postnatal maturation and maintenance of the ocular surface. Involved in the differentiation of epithelial cells and may also function in skeletal and kidney development. Contributes to the down-regulation of p53/TP53 transcription. The polypeptide is Krueppel-like factor 4 (Klf4) (Mus musculus (Mouse)).